Reading from the N-terminus, the 436-residue chain is Protein translocase subunit SecY (436 aa).

Helical transmembrane passes span 17–37, 72–92, 122–142, 146–166, 209–229, 269–289, 309–329, and 380–400; these read ILLT…PVPY, FGLL…IQLL, TFFW…EVIF, LQVY…VLWF, FSNI…CIYI, VMPL…FEII, ISYW…IFFF, and IFLI…NLNI.

It belongs to the SecY/SEC61-alpha family. In terms of assembly, component of the plastid Sec protein translocase complex, which is composed of at least SecY and SecE.

The protein resides in the plastid. It is found in the chloroplast thylakoid membrane. Its function is as follows. The central subunit of the protein translocation channel SecYE. Consists of two halves. These two domains form a lateral gate at the front which open onto the bilayer between TMs 2 and 7, and are clamped together by SecE at the back. The channel is closed by both a pore ring composed of hydrophobic SecY resides and a short helix (helix 2A) on the extracellular side of the membrane which forms a plug. The polypeptide is Protein translocase subunit SecY (Vaucheria litorea (Yellow-green alga)).